The primary structure comprises 260 residues: GDSL esterase/lipase WDL1 (260 aa).

The N-terminal stretch at 1–35 (MLGFAPAPGRPLFVLFGSSIVQFSFSNGGWGAALA) is a signal peptide. The active-site Nucleophile is the Ser-18. N-linked (GlcNAc...) asparagine glycosylation is found at Asn-83 and Asn-150. Catalysis depends on residues Asp-191 and His-194.

Belongs to the 'GDSL' lipolytic enzyme family. In terms of tissue distribution, highly expressed in panicles. Expressed in shoots, mature flowers and seeds.

The protein localises to the endoplasmic reticulum. In terms of biological role, involved in the organization of leaf cuticle and wax crystals. In Oryza sativa subsp. japonica (Rice), this protein is GDSL esterase/lipase WDL1.